The chain runs to 143 residues: Large ribosomal subunit protein uL13 (143 aa).

It belongs to the universal ribosomal protein uL13 family. In terms of assembly, part of the 50S ribosomal subunit.

This protein is one of the early assembly proteins of the 50S ribosomal subunit, although it is not seen to bind rRNA by itself. It is important during the early stages of 50S assembly. The protein is Large ribosomal subunit protein uL13 of Clostridioides difficile (strain 630) (Peptoclostridium difficile).